The sequence spans 215 residues: Ion-translocating oxidoreductase complex subunit G (215 aa).

A helical transmembrane segment spans residues 9–29; the sequence is GLILSLFAIITSGLIALTYFG. FMN phosphoryl threonine is present on threonine 176.

Belongs to the RnfG family. As to quaternary structure, the complex is composed of six subunits: RnfA, RnfB, RnfC, RnfD, RnfE and RnfG. FMN serves as cofactor.

The protein resides in the cell inner membrane. Functionally, part of a membrane-bound complex that couples electron transfer with translocation of ions across the membrane. The chain is Ion-translocating oxidoreductase complex subunit G from Pseudoalteromonas atlantica (strain T6c / ATCC BAA-1087).